The sequence spans 276 residues: MLVNFSKMHGLGNDFLVLDNVTQNVFLSPEQITKFANRNFGVGFDQLLVVEPPYDPDLDFHYRIYNADGSEVGQCGNGARCFAKFVRMKGLCNKHKIKVSTSTGKMNLHIERDGNISVTMPVPQFEPKKIPFTAQKTEGTYILRSESETVLCGAVSMGNPHCVVTVDSVAEADVESLGKELSVHERFPEDANVGFMEIVSPNYIKLRVYERGAAETLACGSGACAAVVIGYMQKKLAKQVTVELPGGKLRIFWQGPGHPVKMSGPATHVFDGQISI.

Positions 13, 46, and 66 each coordinate substrate. Catalysis depends on Cys75, which acts as the Proton donor. Substrate-binding positions include 76 to 77 (GN), Asn159, Asn192, and 210 to 211 (ER). Cys219 acts as the Proton acceptor in catalysis. 220–221 (GS) provides a ligand contact to substrate.

It belongs to the diaminopimelate epimerase family. In terms of assembly, homodimer.

It is found in the cytoplasm. It carries out the reaction (2S,6S)-2,6-diaminopimelate = meso-2,6-diaminopimelate. It participates in amino-acid biosynthesis; L-lysine biosynthesis via DAP pathway; DL-2,6-diaminopimelate from LL-2,6-diaminopimelate: step 1/1. Its function is as follows. Catalyzes the stereoinversion of LL-2,6-diaminopimelate (L,L-DAP) to meso-diaminopimelate (meso-DAP), a precursor of L-lysine and an essential component of the bacterial peptidoglycan. The chain is Diaminopimelate epimerase from Colwellia psychrerythraea (strain 34H / ATCC BAA-681) (Vibrio psychroerythus).